We begin with the raw amino-acid sequence, 837 residues long: Leucine-zipper-like transcriptional regulator 1 (837 aa).

At Ala-2 the chain carries N-acetylalanine. 6 Kelch repeats span residues Ala-76–Ser-125, Met-127–Asp-182, Leu-184–Asp-235, Lys-236–Tyr-282, His-292–Ala-338, and Ala-396–Gly-447. Positions Ser-324–Arg-352 are disordered. BTB domains lie at Cys-440–Arg-534 and Cys-664–Pro-733.

This sequence belongs to the LZTR1 family. As to quaternary structure, homodimer. Component of the BCR(LZTR1) E3 ubiquitin ligase complex, at least composed of CUL3, LZTR1 and RBX1. Interacts with Ras (K-Ras/KRAS, N-Ras/NRAS and H-Ras/HRAS). Interacts with RAF1. Interacts with SHOC2. Interacts with PPP1CB. In terms of processing, phosphorylated on tyrosine upon induction of apoptosis, leading to its degradation by the proteasome. As to expression, widely expressed.

Its subcellular location is the endomembrane system. It localises to the recycling endosome. It is found in the golgi apparatus. It participates in protein modification; protein ubiquitination. Substrate-specific adapter of a BCR (BTB-CUL3-RBX1) E3 ubiquitin-protein ligase complex that mediates ubiquitination of Ras (K-Ras/KRAS, N-Ras/NRAS and H-Ras/HRAS). Is a negative regulator of RAS-MAPK signaling that acts by controlling Ras levels and decreasing Ras association with membranes. In Mus musculus (Mouse), this protein is Leucine-zipper-like transcriptional regulator 1.